The following is a 108-amino-acid chain: Inner membrane protein H108R (108 aa).

A helical transmembrane segment spans residues 10-32 (LIVIITILITTRELSTTMLIVSL). Positions 49 to 64 (ENNTFSMPQKNSFSES) are enriched in polar residues. Positions 49–69 (ENNTFSMPQKNSFSESYNKDK) are disordered. N-linked (GlcNAc...) asparagine; by host glycosylation occurs at Asn50.

This sequence belongs to the asfivirus H108R family.

The protein resides in the virion membrane. This Ornithodoros (relapsing fever ticks) protein is Inner membrane protein H108R.